The chain runs to 347 residues: Heat-inducible transcription repressor HrcA (347 aa).

It belongs to the HrcA family.

Negative regulator of class I heat shock genes (grpE-dnaK-dnaJ and groELS operons). Prevents heat-shock induction of these operons. This chain is Heat-inducible transcription repressor HrcA, found in Enterococcus faecalis (strain ATCC 700802 / V583).